The following is a 427-amino-acid chain: MTWFIDRRLNGKNKSMVNRQRFLRRYKAQIKQSISEAMNKRSVTDVDSGESVSIPTEDISEPMFHQGRGGLRHRVHPGNDHFVQNDRIERPQGGGGGSGSGQGQASQDGEGQDEFVFQISKDEYLDLLFEDLALPNLKQNQQRQLTEYKTHRAGYTANGVPANISVVRSLQNSLARRTAMTAGKRRELHALEENLAIISNSEPAQLLEEERLRKEIAELRAKIERVPFIDTFDLRYKNYEKRPDPSSQAVMFCLMDVSGSMDQSTKDMAKRFYILLYLFLSRTYKNVEVVYIRHHTQAKEVDEHEFFYSQETGGTIVSSALKLMDEVVKERYNPAQWNIYAAQASDGDNWADDSPLCHEILAKKLLPVVRYYSYIEITRRAHQTLWREYEHLQSTFDNFAMQHIRDQDDIYPVFRELFHKQNATAKD.

Over residues 79-90 the composition is skewed to basic and acidic residues; sequence NDHFVQNDRIER. Positions 79-110 are disordered; it reads NDHFVQNDRIERPQGGGGGSGSGQGQASQDGE. Residues 92–102 show a composition bias toward gly residues; sequence QGGGGGSGSGQ.

The protein belongs to the UPF0229 family.

The protein is UPF0229 protein YeaH of Shigella boydii serotype 18 (strain CDC 3083-94 / BS512).